A 90-amino-acid polypeptide reads, in one-letter code: Large ribosomal subunit protein eL34 (90 aa).

Positions 38–65 are disordered; sequence ARCGRPLGGVPRGRPPRVRRLSKTAKRP. Positions 51–62 are enriched in basic residues; it reads RPPRVRRLSKTA.

Belongs to the eukaryotic ribosomal protein eL34 family.

The protein is Large ribosomal subunit protein eL34 (rpl34e) of Aeropyrum pernix (strain ATCC 700893 / DSM 11879 / JCM 9820 / NBRC 100138 / K1).